The following is a 361-amino-acid chain: Cobalt-precorrin-5B C(1)-methyltransferase (361 aa).

The protein belongs to the CbiD family.

The enzyme catalyses Co-precorrin-5B + S-adenosyl-L-methionine = Co-precorrin-6A + S-adenosyl-L-homocysteine. It participates in cofactor biosynthesis; adenosylcobalamin biosynthesis; cob(II)yrinate a,c-diamide from sirohydrochlorin (anaerobic route): step 6/10. Its function is as follows. Catalyzes the methylation of C-1 in cobalt-precorrin-5B to form cobalt-precorrin-6A. This Methylorubrum extorquens (strain CM4 / NCIMB 13688) (Methylobacterium extorquens) protein is Cobalt-precorrin-5B C(1)-methyltransferase.